The sequence spans 77 residues: U8-lycotoxin-Ls1j (77 aa).

Residues 1–20 form the signal peptide; that stretch reads MKLIIFTGLILFAIVSLIEA. Positions 21–26 are excised as a propeptide; it reads QANNEK.

This sequence belongs to the neurotoxin 19 (CSTX) family. 08 (U8-Lctx) subfamily. In terms of processing, contains 4 disulfide bonds. As to expression, expressed by the venom gland.

It localises to the secreted. This Lycosa singoriensis (Wolf spider) protein is U8-lycotoxin-Ls1j.